A 471-amino-acid polypeptide reads, in one-letter code: 3-isopropylmalate dehydratase large subunit (471 aa).

The [4Fe-4S] cluster site is built by Cys-347, Cys-409, and Cys-412.

It belongs to the aconitase/IPM isomerase family. LeuC type 1 subfamily. Heterodimer of LeuC and LeuD. The cofactor is [4Fe-4S] cluster.

It carries out the reaction (2R,3S)-3-isopropylmalate = (2S)-2-isopropylmalate. Its pathway is amino-acid biosynthesis; L-leucine biosynthesis; L-leucine from 3-methyl-2-oxobutanoate: step 2/4. Functionally, catalyzes the isomerization between 2-isopropylmalate and 3-isopropylmalate, via the formation of 2-isopropylmaleate. The protein is 3-isopropylmalate dehydratase large subunit of Buchnera aphidicola subsp. Rhopalosiphum padi.